The chain runs to 214 residues: Octanoyltransferase (214 aa).

Residues Lys-35–Phe-211 enclose the BPL/LPL catalytic domain. Substrate-binding positions include Arg-75–His-82, Ser-142–Gly-144, and Gly-155–Ser-157. Cys-173 acts as the Acyl-thioester intermediate in catalysis.

This sequence belongs to the LipB family.

It localises to the cytoplasm. It catalyses the reaction octanoyl-[ACP] + L-lysyl-[protein] = N(6)-octanoyl-L-lysyl-[protein] + holo-[ACP] + H(+). The protein operates within protein modification; protein lipoylation via endogenous pathway; protein N(6)-(lipoyl)lysine from octanoyl-[acyl-carrier-protein]: step 1/2. Functionally, catalyzes the transfer of endogenously produced octanoic acid from octanoyl-acyl-carrier-protein onto the lipoyl domains of lipoate-dependent enzymes. Lipoyl-ACP can also act as a substrate although octanoyl-ACP is likely to be the physiological substrate. This is Octanoyltransferase from Prochlorococcus marinus subsp. pastoris (strain CCMP1986 / NIES-2087 / MED4).